Consider the following 1255-residue polypeptide: DNA-directed RNA polymerase subunit beta' (1255 aa).

Residues Cys-68, Cys-70, Cys-83, and Cys-86 each contribute to the Zn(2+) site. Mg(2+)-binding residues include Asp-457, Asp-459, and Asp-461. Zn(2+) contacts are provided by Cys-803, Cys-885, Cys-892, and Cys-895. Over residues 1220–1240 (NSDEEVSFTEDEYFEDEENDL) the composition is skewed to acidic residues. The interval 1220 to 1255 (NSDEEVSFTEDEYFEDEENDLSTENFDDLKFSEEEE) is disordered. Residues 1246–1255 (DDLKFSEEEE) are compositionally biased toward basic and acidic residues.

It belongs to the RNA polymerase beta' chain family. In terms of assembly, the RNAP catalytic core consists of 2 alpha, 1 beta, 1 beta' and 1 omega subunit. When a sigma factor is associated with the core the holoenzyme is formed, which can initiate transcription. It depends on Mg(2+) as a cofactor. Zn(2+) is required as a cofactor.

The enzyme catalyses RNA(n) + a ribonucleoside 5'-triphosphate = RNA(n+1) + diphosphate. Its function is as follows. DNA-dependent RNA polymerase catalyzes the transcription of DNA into RNA using the four ribonucleoside triphosphates as substrates. The polypeptide is DNA-directed RNA polymerase subunit beta' (Lachnoclostridium phytofermentans (strain ATCC 700394 / DSM 18823 / ISDg) (Clostridium phytofermentans)).